The chain runs to 287 residues: CTD small phosphatase-like protein 3 (287 aa).

The FCP1 homology domain occupies 60 to 219 (RSTPEYTLVL…LKLCSFLEAI (160 aa)).

This sequence belongs to the CTDSPL2 family.

Its function is as follows. Probable phosphatase. The polypeptide is CTD small phosphatase-like protein 3 (scpl-3) (Caenorhabditis elegans).